Consider the following 816-residue polypeptide: Probable transcriptional regulator SLK2 (816 aa).

Disordered stretches follow at residues 133–153 (HDPS…SQTN) and 166–189 (SFFQ…KQDD). Polar residues-rich tracts occupy residues 139–153 (LGGS…SQTN) and 166–176 (SFFQDPNNLTQ). A dimerization region spans residues 307–554 (PSESSIVYWR…DQKVGPIEAL (248 aa)). Positions 316–330 (RKFVTEYFSPRAKKR) match the Nuclear localization signal motif. Composition is skewed to polar residues over residues 644–662 (IQQE…QGTS) and 672–711 (PSIS…SGNQ). Positions 644-711 (IQQEPSRNRS…QPPSCSSGNQ (68 aa)) are disordered.

The protein belongs to the adn1/SEU family. As to quaternary structure, forms corepressor complexes with LUH; LUH is the transcription repressor subunit and SLK2 the specific DNA-binding adapters. Expressed in young flower meristems, ovules and the carpel margin meristem.

The protein localises to the nucleus. In terms of biological role, probable transcription regulator that functions in the development of the carpel margin meristem similarly to SEUSS (SEU). In association with SEU, supports organ development from meristematic regions by facilitating auxin response and thus organ initiation, and by sustaining meristematic potential through the maintenance of PHABULOSA expression. DNA-binding adapter subunit of the SEU-SLK2 transcriptional corepressor of abiotic stress (e.g. salt and osmotic stress) response genes. The polypeptide is Probable transcriptional regulator SLK2 (SLK2) (Arabidopsis thaliana (Mouse-ear cress)).